The chain runs to 436 residues: Chromosomal replication initiator protein DnaA (436 aa).

The interval 1–80 (MSHEAVWQHV…QAPRFELRVV (80 aa)) is domain I, interacts with DnaA modulators. The tract at residues 80-100 (VPGVVVQEDIFQAAPAEAPRP) is domain II. Residues 101–317 (KLNPKYTFEN…GALMRAIAFA (217 aa)) form a domain III, AAA+ region region. ATP contacts are provided by Gly-145, Gly-147, Lys-148, and Thr-149. The tract at residues 318–436 (SLNGVELTRA…LLRTLREACT (119 aa)) is domain IV, binds dsDNA.

It belongs to the DnaA family. Oligomerizes as a right-handed, spiral filament on DNA at oriC.

The protein resides in the cytoplasm. It carries out the reaction ATP + H2O = ADP + phosphate + H(+). Plays an essential role in the initiation and regulation of chromosomal replication. ATP-DnaA binds to the origin of replication (oriC) to initiate formation of the DNA replication initiation complex once per cell cycle. Binds the DnaA box (a 9 base pair repeat at the origin) and separates the double-stranded (ds)DNA. Forms a right-handed helical filament on oriC DNA; dsDNA binds to the exterior of the filament while single-stranded (ss)DNA is stabiized in the filament's interior. The ATP-DnaA-oriC complex binds and stabilizes one strand of the AT-rich DNA unwinding element (DUE), permitting loading of DNA polymerase. After initiation quickly degrades to an ADP-DnaA complex that is not apt for DNA replication. Binds acidic phospholipids. Functionally, the DnaA box consensus is 5'-TTATC[CA]A[CA]A-3' in this bacterium; oriC consists of 13 clustered DnaA boxes and a 40 base pair AT-rich region. ATP-DnaA binds cooperatively to multiple DnaA boxes, while ADP-DnaA binds with low cooperativity to the individual DnaA boxes. About 16-18 DnaA protein molecules bind their sites in oriC. Has a slow ATPase activity. Binds linear and supercoiled DNA. The sequence is that of Chromosomal replication initiator protein DnaA from Thermus thermophilus (strain ATCC 27634 / DSM 579 / HB8).